An 81-amino-acid chain; its full sequence is ATP synthase subunit c (81 aa).

2 helical membrane passes run 7-27 and 57-77; these read AASVLAAALAVGLAAIGPGIG and LAFMEALTIYGLVVALVLLFA.

The protein belongs to the ATPase C chain family. As to quaternary structure, F-type ATPases have 2 components, F(1) - the catalytic core - and F(0) - the membrane proton channel. F(1) has five subunits: alpha(3), beta(3), gamma(1), delta(1), epsilon(1). F(0) has four main subunits: a(1), b(1), b'(1) and c(10-14). The alpha and beta chains form an alternating ring which encloses part of the gamma chain. F(1) is attached to F(0) by a central stalk formed by the gamma and epsilon chains, while a peripheral stalk is formed by the delta, b and b' chains.

Its subcellular location is the cellular thylakoid membrane. F(1)F(0) ATP synthase produces ATP from ADP in the presence of a proton or sodium gradient. F-type ATPases consist of two structural domains, F(1) containing the extramembraneous catalytic core and F(0) containing the membrane proton channel, linked together by a central stalk and a peripheral stalk. During catalysis, ATP synthesis in the catalytic domain of F(1) is coupled via a rotary mechanism of the central stalk subunits to proton translocation. In terms of biological role, key component of the F(0) channel; it plays a direct role in translocation across the membrane. A homomeric c-ring of between 10-14 subunits forms the central stalk rotor element with the F(1) delta and epsilon subunits. The polypeptide is ATP synthase subunit c (Synechococcus elongatus (strain ATCC 33912 / PCC 7942 / FACHB-805) (Anacystis nidulans R2)).